The following is a 376-amino-acid chain: Mitogen-activated protein kinase 5 (376 aa).

The Protein kinase domain occupies 43 to 329 (VPPIRPIGRG…VEEALCYPYL (287 aa)). ATP is bound by residues 49–57 (IGRGAYGFV) and Lys-72. Residue Asp-169 is the Proton acceptor of the active site. The residue at position 201 (Thr-201) is a Phosphothreonine. The short motif at 201 to 203 (TEY) is the TXY element. A Phosphotyrosine modification is found at Tyr-203. Position 206 is a phosphothreonine (Thr-206).

This sequence belongs to the protein kinase superfamily. CMGC Ser/Thr protein kinase family. MAP kinase subfamily. Post-translationally, autophosphorylated on threonine and tyrosine residues. Dually phosphorylated on Thr-201 and Tyr-203, which activates the enzyme.

It carries out the reaction L-seryl-[protein] + ATP = O-phospho-L-seryl-[protein] + ADP + H(+). It catalyses the reaction L-threonyl-[protein] + ATP = O-phospho-L-threonyl-[protein] + ADP + H(+). Its activity is regulated as follows. Activated by threonine and tyrosine phosphorylation. Activated by the MAP kinase kinase MKK2. Activated by the MAP kinase kinase MKK6 in vitro. The chain is Mitogen-activated protein kinase 5 (MPK5) from Arabidopsis thaliana (Mouse-ear cress).